Reading from the N-terminus, the 392-residue chain is Heat-inducible transcription repressor HrcA (392 aa).

Belongs to the HrcA family.

Negative regulator of class I heat shock genes (grpE-dnaK-dnaJ and groELS operons). Prevents heat-shock induction of these operons. This Chlamydia muridarum (strain MoPn / Nigg) protein is Heat-inducible transcription repressor HrcA.